Here is a 609-residue protein sequence, read N- to C-terminus: Dynamin-like protein 2 (609 aa).

Positions 1–16 are inserts into assembly domain of DLP1, required for tetramerization; sequence MQINLLNDFIKAYENT. The linker stretch occupies residues 17–25; the sequence is YSVSFDDSF. Residues 63-310 form the Dynamin-type G domain; that stretch reads NIAIIGQFSS…FVGIFDRLLN (248 aa). The G1 motif stretch occupies residues 68–75; sequence GQFSSGKS. 72–76 is a GDP binding site; sequence SGKSS. Positions 93-95 are G2 motif; that stretch reads PVT. The interval 158–161 is G3 motif; that stretch reads DTPG. Positions 216-219 are G4 motif; sequence NQKD.

The protein belongs to the TRAFAC class dynamin-like GTPase superfamily. Dynamin/Fzo/YdjA family. In terms of assembly, forms a 2:2 heterotetramer with DLP1. DLP2 forms a central back-to-back dimer flanked on each side by a DLP1 subunit. In the crystal structures the 2 DLP1 subunits are in very different conformations.

Its subcellular location is the cytoplasm. It localises to the cytosol. The enzyme catalyses GTP + H2O = GDP + phosphate + H(+). The heterotetrameric DLP1(2)-DLP2(2) complex tethers liposomes and may mediate their fusion. Initial binding is probably mediated by DLP1, while DLP2 couples DLP1 subunits and increases the effective reach of the complex up to 45 nm. The role of the nucleotide is unknown. This subunit alone very weakly binds to liposomes; GTP, GDP, GMPPCP and GMPPNP do not change heterotetramer binding. Tetramerization is required for GTPase activity, suggesting the GTPase domains (dynamin-type G) from DLP1 and DLP2 must dimerize to reconstitute the GTPase active site. The chain is Dynamin-like protein 2 from Campylobacter jejuni subsp. jejuni serotype O:23/36 (strain 81-176).